A 124-amino-acid chain; its full sequence is Small ribosomal subunit protein uS12 (124 aa).

Asp90 bears the 3-methylthioaspartic acid mark.

This sequence belongs to the universal ribosomal protein uS12 family. In terms of assembly, part of the 30S ribosomal subunit. Contacts proteins S8 and S17. May interact with IF1 in the 30S initiation complex.

With S4 and S5 plays an important role in translational accuracy. Functionally, interacts with and stabilizes bases of the 16S rRNA that are involved in tRNA selection in the A site and with the mRNA backbone. Located at the interface of the 30S and 50S subunits, it traverses the body of the 30S subunit contacting proteins on the other side and probably holding the rRNA structure together. The combined cluster of proteins S8, S12 and S17 appears to hold together the shoulder and platform of the 30S subunit. The chain is Small ribosomal subunit protein uS12 from Wolbachia sp. subsp. Brugia malayi (strain TRS).